A 203-amino-acid polypeptide reads, in one-letter code: NAD(P)H dehydrogenase (quinone) (203 aa).

The Flavodoxin-like domain occupies 3–194 (VLIPFYSMYG…AGARYQGKYI (192 aa)). Residues 9 to 14 (SMYGHI) and 82 to 84 (TRF) contribute to the FMN site. Tyr11 contacts NAD(+). Substrate is bound at residue Trp102. Residues 117–123 (SSATQHG) and His138 each bind FMN.

Belongs to the WrbA family. It depends on FMN as a cofactor.

It carries out the reaction a quinone + NADH + H(+) = a quinol + NAD(+). The enzyme catalyses a quinone + NADPH + H(+) = a quinol + NADP(+). The protein is NAD(P)H dehydrogenase (quinone) of Geobacter metallireducens (strain ATCC 53774 / DSM 7210 / GS-15).